The primary structure comprises 125 residues: Phosphoribosyl-AMP cyclohydrolase (125 aa).

D74 lines the Mg(2+) pocket. C75 lines the Zn(2+) pocket. Residues D76 and D78 each contribute to the Mg(2+) site. Positions 92 and 99 each coordinate Zn(2+).

The protein belongs to the PRA-CH family. In terms of assembly, homodimer. Requires Mg(2+) as cofactor. It depends on Zn(2+) as a cofactor.

The protein localises to the cytoplasm. The catalysed reaction is 1-(5-phospho-beta-D-ribosyl)-5'-AMP + H2O = 1-(5-phospho-beta-D-ribosyl)-5-[(5-phospho-beta-D-ribosylamino)methylideneamino]imidazole-4-carboxamide. It functions in the pathway amino-acid biosynthesis; L-histidine biosynthesis; L-histidine from 5-phospho-alpha-D-ribose 1-diphosphate: step 3/9. Its function is as follows. Catalyzes the hydrolysis of the adenine ring of phosphoribosyl-AMP. The protein is Phosphoribosyl-AMP cyclohydrolase of Geobacter metallireducens (strain ATCC 53774 / DSM 7210 / GS-15).